Here is a 134-residue protein sequence, read N- to C-terminus: Large ribosomal subunit protein eL14 (134 aa).

This sequence belongs to the eukaryotic ribosomal protein eL14 family. As to quaternary structure, component of the large ribosomal subunit (LSU). Mature yeast ribosomes consist of a small (40S) and a large (60S) subunit. The 40S small subunit contains 1 molecule of ribosomal RNA (18S rRNA) and at least 33 different proteins. The large 60S subunit contains 3 rRNA molecules (25S, 5.8S and 5S rRNA) and at least 46 different proteins.

The protein resides in the cytoplasm. The protein localises to the nucleus. Component of the ribosome, a large ribonucleoprotein complex responsible for the synthesis of proteins in the cell. The small ribosomal subunit (SSU) binds messenger RNAs (mRNAs) and translates the encoded message by selecting cognate aminoacyl-transfer RNA (tRNA) molecules. The large subunit (LSU) contains the ribosomal catalytic site termed the peptidyl transferase center (PTC), which catalyzes the formation of peptide bonds, thereby polymerizing the amino acids delivered by tRNAs into a polypeptide chain. The nascent polypeptides leave the ribosome through a tunnel in the LSU and interact with protein factors that function in enzymatic processing, targeting, and the membrane insertion of nascent chains at the exit of the ribosomal tunnel. The protein is Large ribosomal subunit protein eL14 (rpl14) of Schizosaccharomyces pombe (strain 972 / ATCC 24843) (Fission yeast).